A 347-amino-acid chain; its full sequence is P2Y purinoceptor 12 (347 aa).

Over 1–33 the chain is Extracellular; the sequence is MDVPGVNTTSANTTFSPGTSTLCVRDYKITQVL. N-linked (GlcNAc...) asparagine glycosylation is found at Asn7 and Asn12. Cystine bridges form between Cys23-Cys276 and Cys103-Cys181. Residues 34–56 form a helical membrane-spanning segment; the sequence is FPLLYTVLFFAGLITNSLAMRIF. The Cytoplasmic segment spans residues 57-67; that stretch reads FQIRSKSNFII. Phosphoserine is present on residues Ser61 and Ser63. Residues 68-88 form a helical membrane-spanning segment; that stretch reads FLKNTVISDLLMILTFPFKIL. The Extracellular portion of the chain corresponds to 89–103; the sequence is SDAKLGAGPLRTLVC. ADP-binding residues include Arg99, Cys103, and Tyr111. The helical transmembrane segment at 104–124 threads the bilayer; the sequence is QVTSVTFYFTMYISISFLGLI. The Cytoplasmic segment spans residues 125 to 148; sequence TIDRYLKTTRPFKTSSPSNLLGAK. The helical transmembrane segment at 149–168 threads the bilayer; the sequence is ILSVVIWAFMFLISLPNMIL. Residues 162–165, 181–185, His193, and Asn197 each bind ADP; these read SLPN and CSFLK. The Extracellular portion of the chain corresponds to 169 to 191; sequence TNRRPKDKDVTKCSFLKSEFGLV. Residues 192–213 traverse the membrane as a helical segment; it reads WHEIVNYICQVIFWINFLIVIV. Topologically, residues 214-239 are cytoplasmic; sequence CYSLITKELYRSYVRTRGSAKVPKKK. The helical transmembrane segment at 240-265 threads the bilayer; the sequence is VNVKVFIIIAVFFICFVPFHFARIPY. Residues 262 to 265, Gln269, and Lys286 each bind ADP; that span reads RIPY. Over 266-284 the chain is Extracellular; the sequence is TLSQTRAVFDCSAENTLFY. The chain crosses the membrane as a helical span at residues 285–304; it reads VKESTLWLTSLNACLDPFIY. The Cytoplasmic segment spans residues 305-347; it reads FFLCKSFRNSLTSMLRCSNSTSTSGTNKKKGQEGGEPSEETPM. A disordered region spans residues 321-347; sequence CSNSTSTSGTNKKKGQEGGEPSEETPM.

This sequence belongs to the G-protein coupled receptor 1 family.

It localises to the cell membrane. In terms of biological role, receptor for ADP and ATP coupled to G-proteins that inhibit the adenylyl cyclase second messenger system. Required for normal platelet aggregation and blood coagulation. The chain is P2Y purinoceptor 12 (P2ry12) from Mus musculus (Mouse).